The chain runs to 191 residues: Peptidyl-tRNA hydrolase (191 aa).

Tyrosine 14 contacts tRNA. Residue histidine 19 is the Proton acceptor of the active site. Phenylalanine 64, asparagine 66, and asparagine 113 together coordinate tRNA.

This sequence belongs to the PTH family. As to quaternary structure, monomer.

It localises to the cytoplasm. It catalyses the reaction an N-acyl-L-alpha-aminoacyl-tRNA + H2O = an N-acyl-L-amino acid + a tRNA + H(+). In terms of biological role, hydrolyzes ribosome-free peptidyl-tRNAs (with 1 or more amino acids incorporated), which drop off the ribosome during protein synthesis, or as a result of ribosome stalling. Its function is as follows. Catalyzes the release of premature peptidyl moieties from peptidyl-tRNA molecules trapped in stalled 50S ribosomal subunits, and thus maintains levels of free tRNAs and 50S ribosomes. This Fusobacterium nucleatum subsp. nucleatum (strain ATCC 25586 / DSM 15643 / BCRC 10681 / CIP 101130 / JCM 8532 / KCTC 2640 / LMG 13131 / VPI 4355) protein is Peptidyl-tRNA hydrolase.